A 174-amino-acid polypeptide reads, in one-letter code: Secreted cysteine-rich protein UMAG_00792 (174 aa).

Positions 1 to 26 (MVSFKSSSLFLHSLSALLVLTTLSSA) are cleaved as a signal peptide. N77 carries N-linked (GlcNAc...) asparagine glycosylation.

In terms of assembly, secreted cysteine-rich proteins (SCRPs) are predicted to form amyloids.

Its subcellular location is the secreted. Its function is as follows. Secreted cysteine-rich protein that might form amyloid strutures which are involved in attachment to hydrophobic surfaces and in formation of hydrophobic aerial hyphae. This is Secreted cysteine-rich protein UMAG_00792 from Mycosarcoma maydis (Corn smut fungus).